We begin with the raw amino-acid sequence, 199 residues long: Imidazoleglycerol-phosphate dehydratase (199 aa).

Belongs to the imidazoleglycerol-phosphate dehydratase family.

The protein localises to the cytoplasm. The catalysed reaction is D-erythro-1-(imidazol-4-yl)glycerol 3-phosphate = 3-(imidazol-4-yl)-2-oxopropyl phosphate + H2O. It functions in the pathway amino-acid biosynthesis; L-histidine biosynthesis; L-histidine from 5-phospho-alpha-D-ribose 1-diphosphate: step 6/9. The polypeptide is Imidazoleglycerol-phosphate dehydratase (Methylibium petroleiphilum (strain ATCC BAA-1232 / LMG 22953 / PM1)).